We begin with the raw amino-acid sequence, 47 residues long: Large ribosomal subunit protein bL33 (47 aa).

The protein belongs to the bacterial ribosomal protein bL33 family.

This is Large ribosomal subunit protein bL33 from Staphylococcus xylosus.